A 200-amino-acid polypeptide reads, in one-letter code: Systemin (200 aa).

Positions 1 to 33 are disordered; it reads MGTPSYDIKNKGDDMQEEPKVKLHHEKGGDEKE. 2 consecutive propeptides follow at residues 1–178 and 197–200; these read MGTP…REDL and NNKL. The 1; truncated repeat unit spans residues 3-8; the sequence is TPSYDI. The segment covering 8-33 has biased composition (basic and acidic residues); it reads IKNKGDDMQEEPKVKLHHEKGGDEKE. Tandem repeats lie at residues 37-45, 80-88, 117-125, and 145-153. 2 disordered regions span residues 106–159 and 178–200; these read EEEE…MEGE and LAVQ…NNKL. Basic and acidic residues-rich tracts occupy residues 111–140 and 146–158; these read EKEK…KVEH and KETP…KMEG.

As to expression, all organs except the roots. Transported out of wounds to distal tissues.

The protein resides in the cytoplasm. Its function is as follows. Activates a lipid-based signal transduction pathway in which linolenic acid is converted to jasmonic acid, a potent activator of defense gene transcription, including proteinase inhibitor. The polypeptide is Systemin (Solanum lycopersicum (Tomato)).